The following is a 447-amino-acid chain: Tubulin beta-2 chain (447 aa).

Residues Gln-11, Glu-69, Ser-138, Gly-142, Thr-143, Gly-144, Asn-204, and Asn-226 each contribute to the GTP site. Glu-69 lines the Mg(2+) pocket. A compositionally biased stretch (polar residues) spans 419–428 (VSEYQQYQDA). The segment at 419–447 (VSEYQQYQDATSDEEGEYEDEDQEPEEDM) is disordered. Acidic residues predominate over residues 429 to 447 (TSDEEGEYEDEDQEPEEDM).

It belongs to the tubulin family. In terms of assembly, dimer of alpha and beta chains. A typical microtubule is a hollow water-filled tube with an outer diameter of 25 nm and an inner diameter of 15 nM. Alpha-beta heterodimers associate head-to-tail to form protofilaments running lengthwise along the microtubule wall with the beta-tubulin subunit facing the microtubule plus end conferring a structural polarity. Microtubules usually have 13 protofilaments but different protofilament numbers can be found in some organisms and specialized cells. It depends on Mg(2+) as a cofactor.

The protein localises to the cytoplasm. The protein resides in the cytoskeleton. Functionally, tubulin is the major constituent of microtubules, a cylinder consisting of laterally associated linear protofilaments composed of alpha- and beta-tubulin heterodimers. Microtubules grow by the addition of GTP-tubulin dimers to the microtubule end, where a stabilizing cap forms. Below the cap, tubulin dimers are in GDP-bound state, owing to GTPase activity of alpha-tubulin. In Triticum aestivum (Wheat), this protein is Tubulin beta-2 chain (TUBB2).